The sequence spans 497 residues: Argininosuccinate lyase (497 aa).

Belongs to the lyase 1 family. Argininosuccinate lyase subfamily.

The protein resides in the cytoplasm. It carries out the reaction 2-(N(omega)-L-arginino)succinate = fumarate + L-arginine. It functions in the pathway amino-acid biosynthesis; L-arginine biosynthesis; L-arginine from L-ornithine and carbamoyl phosphate: step 3/3. The sequence is that of Argininosuccinate lyase from Clavibacter michiganensis subsp. michiganensis (strain NCPPB 382).